A 72-amino-acid chain; its full sequence is Large ribosomal subunit protein uL29 (72 aa).

This sequence belongs to the universal ribosomal protein uL29 family.

The sequence is that of Large ribosomal subunit protein uL29 from Prochlorococcus marinus (strain MIT 9312).